A 331-amino-acid chain; its full sequence is MDFQQLILNKERRWQRNLVIMSVVLVLLSTIHLMVGEVFLSPFQSLSVFEQKLLLDLRLPRLVAAAMIGAALAVSGATLQVLLGNVLAEPGVLGISGGASLAMVLVMFALPVLPTPMIFMLAAIAGSMLFTLILVGIARAMHLTTARLLLVGVALGILSSAIVTWAFYFSDDLSLRQLMYWLMGSIGGASWYQHTVTLVMLPVLVWLCCQGKPLDKLMLGEIHATQLGVDVHQMRWKLILAISVLVGCSVALGGIISFVGLVVPHLLRLAFGTENRYLLPLSAIFGAALLVFADIGARLLLDSAELPLGVMTTSIGAPIFIWMLVKSHDAR.

The next 9 helical transmembrane spans lie at 20 to 42 (IMSVVLVLLSTIHLMVGEVFLSP), 62 to 84 (LVAAAMIGAALAVSGATLQVLLG), 91 to 113 (GVLGISGGASLAMVLVMFALPVL), 118 to 140 (IFMLAAIAGSMLFTLILVGIARA), 147 to 169 (RLLLVGVALGILSSAIVTWAFYF), 189 to 208 (ASWYQHTVTLVMLPVLVWLC), 240 to 262 (LAISVLVGCSVALGGIISFVGLV), 277 to 299 (YLLPLSAIFGAALLVFADIGARL), and 306 to 325 (LPLGVMTTSIGAPIFIWMLV).

The protein belongs to the binding-protein-dependent transport system permease family. FecCD subfamily. As to quaternary structure, the complex is composed of two ATP-binding proteins (BtuD), two transmembrane proteins (BtuC) and a solute-binding protein (BtuF).

Its subcellular location is the cell inner membrane. Functionally, part of the ABC transporter complex BtuCDF involved in vitamin B12 import. Involved in the translocation of the substrate across the membrane. The polypeptide is Vitamin B12 import system permease protein BtuC (Vibrio parahaemolyticus serotype O3:K6 (strain RIMD 2210633)).